The chain runs to 205 residues: MIMKSSNVVWHKSTVTRQNRQEQNGHLSTILWFTGLSGAGKSTLAHTVEDALSKMNCRTFVIDGDNIRHGLCADLGFSSEDRVENIRRIGEVAKLFTEAGIIVLSAFISPFRADRDRVRELVPEGDFIEIYCQASLEVCEERDVKGLYKKARSGEIPNFTGISSPYEPPEEPEIIVKTGEDSLEVCAQQVIEFLQERGIVQPTSA.

Residue 35-42 (GLSGAGKS) participates in ATP binding. Serine 109 functions as the Phosphoserine intermediate in the catalytic mechanism.

The protein belongs to the APS kinase family.

It carries out the reaction adenosine 5'-phosphosulfate + ATP = 3'-phosphoadenylyl sulfate + ADP + H(+). It functions in the pathway sulfur metabolism; hydrogen sulfide biosynthesis; sulfite from sulfate: step 2/3. Its function is as follows. Catalyzes the synthesis of activated sulfate. The sequence is that of Adenylyl-sulfate kinase from Acaryochloris marina (strain MBIC 11017).